We begin with the raw amino-acid sequence, 254 residues long: Triosephosphate isomerase 2 (254 aa).

Position 9–11 (9–11 (NMK)) interacts with substrate. His96 serves as the catalytic Electrophile. The Proton acceptor role is filled by Glu168. Substrate-binding residues include Gly174 and Ser212.

Belongs to the triosephosphate isomerase family. Homodimer.

The protein resides in the cytoplasm. It catalyses the reaction D-glyceraldehyde 3-phosphate = dihydroxyacetone phosphate. It participates in polyol metabolism; glycerol degradation. Functionally, involved in the glycerol metabolism. Catalyzes stereospecifically the conversion of dihydroxyacetone phosphate (DHAP) to D-glyceraldehyde-3-phosphate (G3P). The chain is Triosephosphate isomerase 2 from Listeria innocua serovar 6a (strain ATCC BAA-680 / CLIP 11262).